Reading from the N-terminus, the 323-residue chain is uncharacterized protein (323 aa).

It belongs to the glycosyltransferase 2 family.

This is an uncharacterized protein from Haemophilus influenzae (strain ATCC 51907 / DSM 11121 / KW20 / Rd).